The sequence spans 476 residues: Glycogen synthase (476 aa).

Lys-15 serves as a coordination point for ADP-alpha-D-glucose.

It belongs to the glycosyltransferase 1 family. Bacterial/plant glycogen synthase subfamily.

The enzyme catalyses [(1-&gt;4)-alpha-D-glucosyl](n) + ADP-alpha-D-glucose = [(1-&gt;4)-alpha-D-glucosyl](n+1) + ADP + H(+). It participates in glycan biosynthesis; glycogen biosynthesis. In terms of biological role, synthesizes alpha-1,4-glucan chains using ADP-glucose. The chain is Glycogen synthase from Yersinia pestis bv. Antiqua (strain Antiqua).